The following is an 862-amino-acid chain: Protein SEY1 (862 aa).

The Cytoplasmic segment spans residues Met1–Gln747. The region spanning Gly49–Ala306 is the GB1/RHD3-type G domain. GTP is bound at residue Gly59–Ser66. The stretch at Ser481–Arg507 forms a coiled coil. The chain crosses the membrane as a helical span at residues Ile748 to Leu768. Residues Arg769–Pro771 lie on the Lumenal side of the membrane. Residues Leu772 to Leu792 traverse the membrane as a helical segment. The Cytoplasmic segment spans residues Trp793 to Trp862. Residues Leu819–Trp862 are disordered. The segment covering Gly852 to Trp862 has biased composition (acidic residues).

Belongs to the TRAFAC class dynamin-like GTPase superfamily. GB1/RHD3 GTPase family. RHD3 subfamily.

It localises to the endoplasmic reticulum membrane. In terms of biological role, cooperates with the reticulon proteins and tubule-shaping DP1 family proteins to generate and maintain the structure of the tubular endoplasmic reticulum network. Has GTPase activity, which is required for its function in ER organization. The polypeptide is Protein SEY1 (Uncinocarpus reesii (strain UAMH 1704)).